A 400-amino-acid chain; its full sequence is Formate-dependent phosphoribosylglycinamide formyltransferase (400 aa).

N(1)-(5-phospho-beta-D-ribosyl)glycinamide-binding positions include 22–23 (EL) and glutamate 82. ATP contacts are provided by residues arginine 115, lysine 157, 162–167 (SSGKGQ), 197–200 (EGFV), and glutamate 205. The region spanning 120-315 (RLAAETLGLP…EFELHARAIL (196 aa)) is the ATP-grasp domain. Positions 274 and 286 each coordinate Mg(2+). N(1)-(5-phospho-beta-D-ribosyl)glycinamide contacts are provided by residues aspartate 293, lysine 362, and 369-370 (RR).

Belongs to the PurK/PurT family. Homodimer.

The catalysed reaction is N(1)-(5-phospho-beta-D-ribosyl)glycinamide + formate + ATP = N(2)-formyl-N(1)-(5-phospho-beta-D-ribosyl)glycinamide + ADP + phosphate + H(+). The protein operates within purine metabolism; IMP biosynthesis via de novo pathway; N(2)-formyl-N(1)-(5-phospho-D-ribosyl)glycinamide from N(1)-(5-phospho-D-ribosyl)glycinamide (formate route): step 1/1. Its function is as follows. Involved in the de novo purine biosynthesis. Catalyzes the transfer of formate to 5-phospho-ribosyl-glycinamide (GAR), producing 5-phospho-ribosyl-N-formylglycinamide (FGAR). Formate is provided by PurU via hydrolysis of 10-formyl-tetrahydrofolate. This is Formate-dependent phosphoribosylglycinamide formyltransferase from Mycolicibacterium vanbaalenii (strain DSM 7251 / JCM 13017 / BCRC 16820 / KCTC 9966 / NRRL B-24157 / PYR-1) (Mycobacterium vanbaalenii).